A 199-amino-acid polypeptide reads, in one-letter code: NAD(P)H dehydrogenase (quinone) (199 aa).

The Flavodoxin-like domain occupies valine 4 to valine 190. FMN contacts are provided by residues serine 10–methionine 15 and threonine 78–tyrosine 80. Tyrosine 12 is an NAD(+) binding site. Tryptophan 98 is a binding site for substrate. Residues serine 113–glycine 119 and histidine 134 each bind FMN. Positions glycine 157–phenylalanine 185 are disordered. Positions methionine 163–glutamate 177 are enriched in polar residues.

This sequence belongs to the WrbA family. FMN is required as a cofactor.

The enzyme catalyses a quinone + NADH + H(+) = a quinol + NAD(+). It catalyses the reaction a quinone + NADPH + H(+) = a quinol + NADP(+). The protein is NAD(P)H dehydrogenase (quinone) of Brucella anthropi (strain ATCC 49188 / DSM 6882 / CCUG 24695 / JCM 21032 / LMG 3331 / NBRC 15819 / NCTC 12168 / Alc 37) (Ochrobactrum anthropi).